A 274-amino-acid chain; its full sequence is MAKQELMNLFLSKEFASGYKLAELVTGPFAQLLVDYSGVVQSTQRPLVILDNACGTGIISEALNRSLDSQTKGHWELTCGDISDSLVQYVNQRIQDEGWPRAKAQLVDAQDTKLPSSHFTHIFAAFECLRILQPGGTVAISNWQLPEWLVIAKSAVEAMPGDLPFPTVKEFLASLNEGWDSEEPTRVKLEQEGFDMVQVATVSQKLSLPKSTLVELIKPMLPVILGRFWTDEQRAKHEKHIPTALQQYLDDKYGASDDVPVEPRVIIATARKPC.

It belongs to the class I-like SAM-binding methyltransferase superfamily.

It participates in mycotoxin biosynthesis. Acetylaranotin bis-thiomethyltransferase involved in the biosynthesis of acetylaranotin derivatives, members of the epipolythiodioxopiperazine (ETP) class of toxins characterized by a disulfide-bridged cyclic dipeptide. The first step of acetylaranotin biosynthesis is performed by the NRPS ataP which produces diketopiperazine cyclo-L-Phe-L-Phe via the condensation of 2 phenylalanines (L-Phe). The ataC domain of ataTC then catalyzes the formation of bishydroxylation of cyclo-L-Phe-L-Phe. The glutathione S-transferase domain ataG in ataIMG further catalyzes the conjugation of two glutathiones to the bishydroxylated intermediate. Next, the dipeptidase ataJ removes the Glu residues. The following step is performed by the carbon sulfur lyase domain ataI of ataIMG which may convert the bis-cysteinyl adduct to yield an epidithiol intermediate. The ataT domain from ataTC then catalyzes the oxidation of the free dithiols, followed by a cyclization step catalyzed by the cytochrome P450 ataF. AtaF probably acts as an epoxidase to promote a dual epoxidation formation at C8 and C9 along with C8' and C9', followed by the spontaneous nucleophilic attack of the amide nitrogens N10 and N10' to yield an intermediate with the pyrrolidine partial structure. The final steps of acetylaranotin biosynthesis involve the acetylation and ring rearrangement of an epitetrathiodiketopiperazine intermediate to produce acetylaranotin. AtaH probably catalyzes the acetylation of epitetrathiodiketopiperazine to produce a diacetate and ataY is responsible for the formation of the dihydrooxepin moiety that converts the diacetate intermediate to acetylaranotin via acetylapoaranotin. Both enzymes could function independently in the absence of the other. The acetylaranotin bis-thiomethyltransferase ataS located outside of acetylaranotin gene cluster is the main thiomethyltransferase responsible for converting acetylaranotin and its related intermediates to their methylated forms. The polypeptide is Acetylaranotin bis-thiomethyltransferase (Aspergillus terreus (strain NIH 2624 / FGSC A1156)).